We begin with the raw amino-acid sequence, 290 residues long: Glycine--tRNA ligase alpha subunit (290 aa).

Belongs to the class-II aminoacyl-tRNA synthetase family. Tetramer of two alpha and two beta subunits.

Its subcellular location is the cytoplasm. It carries out the reaction tRNA(Gly) + glycine + ATP = glycyl-tRNA(Gly) + AMP + diphosphate. The sequence is that of Glycine--tRNA ligase alpha subunit from Fusobacterium nucleatum subsp. nucleatum (strain ATCC 25586 / DSM 15643 / BCRC 10681 / CIP 101130 / JCM 8532 / KCTC 2640 / LMG 13131 / VPI 4355).